The following is a 153-amino-acid chain: Pheromone-binding protein Gp-9 (153 aa).

The N-terminal stretch at methionine 1–alanine 19 is a signal peptide. 3 disulfide bridges follow: cysteine 37–cysteine 77, cysteine 73–cysteine 129, and cysteine 118–cysteine 138.

It belongs to the PBP/GOBP family. In terms of assembly, homodimer.

Its subcellular location is the secreted. Functionally, colony queen number, a major feature of social organization, is associated with worker genotype for Gp-9. Colonies are headed by either a single reproductive queen (monogyne form) or multiple queens (polygyne form). Differences in worker Gp-9 genotypes between social forms may cause differences in workers' abilities to recognize queens and regulate their numbers. This Solenopsis substituta (Fire ant) protein is Pheromone-binding protein Gp-9.